A 319-amino-acid chain; its full sequence is UPF0761 membrane protein PBPRA3489 (319 aa).

The next 6 helical transmembrane spans lie at 50-70, 107-127, 143-163, 188-208, 215-235, and 249-269; these read LVPMITVVLAALSAFPVFAGL, VGIGALFVVAMMLMSSIDHAL, FSIYWMVLTLGPILVGSSIAV, ALPVIMSSSAFLGLYLLVPNL, ALLGALVASSLFELSKKGFAL, and ALAVIPILFVWVYLCWCIVLL.

Belongs to the UPF0761 family.

The protein localises to the cell inner membrane. The chain is UPF0761 membrane protein PBPRA3489 from Photobacterium profundum (strain SS9).